The sequence spans 445 residues: Cytoplasmic tRNA 2-thiolation protein 2 (445 aa).

Residues 1-11 (MCSIGEDDFGD) show a composition bias toward acidic residues. Positions 1 to 26 (MCSIGEDDFGDEGGVHAMKEESPLPE) are disordered. Residues 13 to 22 (GGVHAMKEES) show a composition bias toward basic and acidic residues.

The protein belongs to the CTU2/NCS2 family.

The protein localises to the cytoplasm. The protein operates within tRNA modification; 5-methoxycarbonylmethyl-2-thiouridine-tRNA biosynthesis. Functionally, plays a central role in 2-thiolation of mcm(5)S(2)U at tRNA wobble positions of tRNA(Lys), tRNA(Glu) and tRNA(Gln). May act by forming a heterodimer with NCS6/CTU1 that ligates sulfur from thiocarboxylated URM1 onto the uridine of tRNAs at wobble position. This is Cytoplasmic tRNA 2-thiolation protein 2 from Aedes aegypti (Yellowfever mosquito).